A 250-amino-acid polypeptide reads, in one-letter code: 2,3-bisphosphoglycerate-dependent phosphoglycerate mutase (250 aa).

Residues 10–17, 23–24, Arg62, 89–92, Lys100, 116–117, and 185–186 each bind substrate; these read RHGESQWN, TG, ERHY, RR, and GN. The active-site Tele-phosphohistidine intermediate is His11. The active-site Proton donor/acceptor is Glu89.

The protein belongs to the phosphoglycerate mutase family. BPG-dependent PGAM subfamily. In terms of assembly, homodimer.

The enzyme catalyses (2R)-2-phosphoglycerate = (2R)-3-phosphoglycerate. Its pathway is carbohydrate degradation; glycolysis; pyruvate from D-glyceraldehyde 3-phosphate: step 3/5. Its function is as follows. Catalyzes the interconversion of 2-phosphoglycerate and 3-phosphoglycerate. The polypeptide is 2,3-bisphosphoglycerate-dependent phosphoglycerate mutase (Klebsiella pneumoniae (strain 342)).